A 351-amino-acid polypeptide reads, in one-letter code: Lipopolysaccharide core biosynthesis mannosyltransferase LpsB (351 aa).

It belongs to the glycosyltransferase group 1 family. Glycosyltransferase 4 subfamily.

The protein operates within bacterial outer membrane biogenesis; LPS core biosynthesis. Functionally, acts at transfer of mannose group to a 3-deoxy-D-mono octulonic acid (KDO) via an alpha-1,5 linkage. In Rhizobium meliloti (strain 1021) (Ensifer meliloti), this protein is Lipopolysaccharide core biosynthesis mannosyltransferase LpsB (lpsB).